We begin with the raw amino-acid sequence, 340 residues long: TATA-box-binding protein (340 aa).

Positions 1–78 (MNLNSPAVSM…HSLQGSSMQM (78 aa)) are disordered. Low complexity predominate over residues 57–68 (PQSIQPMQSQQM). Over residues 69–78 (HSLQGSSMQM) the composition is skewed to polar residues. Repeat copies occupy residues 168 to 244 (LQNI…ARIV) and 258 to 335 (VQNM…YPIL).

Belongs to the TBP family. As to quaternary structure, component of the TFIID basal transcription factor complex, composed of TATA-box-binding protein tbp-1, and a number of TBP-associated factors (TAFs). Binds DNA as monomer.

The protein localises to the nucleus. The TFIID basal transcription factor complex plays a major role in the initiation of RNA polymerase II (Pol II)-dependent transcription. TFIID recognizes and binds promoters via its subunit tbp-1, a TATA-box-binding protein, and promotes assembly of the pre-initiation complex (PIC). The TFIID complex consists of tbp-1 and TBP-associated factors (TAFs). General transcription factor that functions at the core of the TFIID complex. In Caenorhabditis elegans, this protein is TATA-box-binding protein (tbp-1).